A 451-amino-acid polypeptide reads, in one-letter code: Exodeoxyribonuclease 7 large subunit (451 aa).

This sequence belongs to the XseA family. Heterooligomer composed of large and small subunits.

Its subcellular location is the cytoplasm. The enzyme catalyses Exonucleolytic cleavage in either 5'- to 3'- or 3'- to 5'-direction to yield nucleoside 5'-phosphates.. Its function is as follows. Bidirectionally degrades single-stranded DNA into large acid-insoluble oligonucleotides, which are then degraded further into small acid-soluble oligonucleotides. The sequence is that of Exodeoxyribonuclease 7 large subunit from Neisseria meningitidis serogroup C / serotype 2a (strain ATCC 700532 / DSM 15464 / FAM18).